A 248-amino-acid chain; its full sequence is Probable transcriptional regulatory protein PsycPRwf_1013 (248 aa).

This sequence belongs to the TACO1 family.

The protein localises to the cytoplasm. The sequence is that of Probable transcriptional regulatory protein PsycPRwf_1013 from Psychrobacter sp. (strain PRwf-1).